The primary structure comprises 650 residues: Putative pumilio homolog 7, chloroplastic (650 aa).

2 disordered regions span residues 1-22 (MDEF…RTPL) and 200-235 (NDDK…GQEI). The N-terminal 77 residues, 1 to 77 (MDEFREASSV…SPPFNGIIPK (77 aa)), are a transit peptide targeting the chloroplast. Low complexity-rich tracts occupy residues 8–22 (SSVS…RTPL) and 217–232 (PSYS…YNNG). The PUM-HD domain maps to 308-650 (SNTRALMSNN…RIFSRNLLKK (343 aa)). Pumilio repeat units follow at residues 333-368 (DIQG…IIFN), 369-404 (EVIA…QIVL), 408-443 (EEPG…SLVK), 445-480 (ALRP…FIFD), 481-516 (AATK…KLIA), 517-552 (EISR…MMLA), 553-591 (QLKG…ELVS), and 594-625 (HFDQ…SLVE).

The protein resides in the plastid. Its subcellular location is the chloroplast. The protein localises to the cytoplasm. Sequence-specific RNA-binding protein that regulates translation and mRNA stability by binding the 3'-UTR of target mRNAs. The protein is Putative pumilio homolog 7, chloroplastic (APUM7) of Arabidopsis thaliana (Mouse-ear cress).